Here is a 46-residue protein sequence, read N- to C-terminus: Aspartate aminotransferase 1 (46 aa).

This sequence belongs to the class-I pyridoxal-phosphate-dependent aminotransferase family. In terms of assembly, homodimer. It depends on pyridoxal 5'-phosphate as a cofactor.

It carries out the reaction L-aspartate + 2-oxoglutarate = oxaloacetate + L-glutamate. Important for the metabolism of amino acids and Krebs-cycle related organic acids. In plants, it is involved in nitrogen metabolism and in aspects of carbon and energy metabolism. This chain is Aspartate aminotransferase 1, found in Pseudotsuga menziesii (Douglas-fir).